Here is a 414-residue protein sequence, read N- to C-terminus: MKSSSSIFRETSEKKSERWMMMNIGRFSPFFLSSFCITLFFTGFFVYQNPFKSIADQNVLSFQPQIDPECDLFKGHWVPDKRGSLYTNSSCATIPDSKNCIKQGRPDKDFLFWRWKPDGCDLPRFNPKAFLSMVRGKKMNFIGDSVARNHMESLLCLLSMEETPKDIYKDGEDRNRIWYFPKHDFTLSTSWTKFLVEERERRDSNNTGTGLFDLDIGKIDEGWFNGLPNTDIAIVSAAHWFFRPIFIHRGDETLGCIYCNLPNMTQISPEEGFKLVYSAVLRQINECEMCKKDLVTVLRTISPAHFENGTWDTGGTCSRTSPFGENKIDLQSNEMKIRKSQIEQLEGITKRGNKAKKFAVLDVTRVMQMRPDGHPNGYWGNKWMKGYNDCVHWCLPGPIDAWNDFLMAIIRQLR.

Over 1–26 the chain is Cytoplasmic; it reads MKSSSSIFRETSEKKSERWMMMNIGR. Residues 27-47 traverse the membrane as a helical; Signal-anchor for type II membrane protein segment; it reads FSPFFLSSFCITLFFTGFFVY. Residues 48 to 414 lie on the Lumenal side of the membrane; sequence QNPFKSIADQ…FLMAIIRQLR (367 aa). 4 disulfide bridges follow: cysteine 70–cysteine 120, cysteine 91–cysteine 156, cysteine 100–cysteine 394, and cysteine 317–cysteine 390. Residue asparagine 88 is glycosylated (N-linked (GlcNAc...) asparagine). The short motif at 143-145 is the GDS motif element; the sequence is GDS. Catalysis depends on serine 145, which acts as the Nucleophile. 3 N-linked (GlcNAc...) asparagine glycosylation sites follow: asparagine 205, asparagine 263, and asparagine 308. Aspartate 389 serves as the catalytic Proton donor. The short motif at 389–392 is the DXXH motif element; the sequence is DCVH. Histidine 392 functions as the Proton acceptor in the catalytic mechanism.

It belongs to the PC-esterase family. TBL subfamily.

The protein localises to the membrane. Xyloglucan acetyltransferase that catalyzes the acetylation of fucosylated Gal residues on xyloglucan side chains. Predominantly catalyze 6-O-monoacetylation of Gal residues in the Fuc-Gal-Xyl trisaccharide side chains of xyloglucan oligomers. Involved in xyloglucan specific O-acetylation in seeds. This is xyloglucan O-acetyltransferase 2 from Arabidopsis thaliana (Mouse-ear cress).